The primary structure comprises 162 residues: Caveolin-2 (162 aa).

The Cytoplasmic segment spans residues 1–86; the sequence is MGLETEKADV…FEISKYVLYK (86 aa). Residue Y19 is modified to Phosphotyrosine; by SRC. A phosphoserine mark is found at S20 and S23. Position 27 is a phosphotyrosine; by SRC (Y27). S36 is modified (phosphoserine). Positions 87–107 form an intramembrane region, helical; the sequence is FLTVFLAIPLAFVAGILFATL. Residues 108–162 lie on the Cytoplasmic side of the membrane; that stretch reads SCLHIWIIMPFVKTCLMVLPSVQTIWKSVTDVIIAPLCTSVGRSFSSISLRLSQD.

Belongs to the caveolin family. As to quaternary structure, monomer or homodimer. Interacts with CAV1; the interaction forms a stable heterooligomeric complex that is required for targeting to lipid rafts and for caveolae formation. Tyrosine phosphorylated forms do not form heterooligomers with the Tyr-19-phosphorylated form existing as a monomer or dimer, and the Tyr-27-form as a monomer only. Interacts (tyrosine phosphorylated form) with the SH2 domain-containing proteins, RASA1, NCK1 and SRC. Interacts (tyrosine phosphorylated form) with INSR, the interaction (Tyr-27-phosphorylated form) is increased on insulin stimulation. Interacts (Tyr-19 phosphorylated form) with MAPK1 (phosphorylated form); the interaction, promoted by insulin, leads to nuclear location and MAPK1 activation. Interacts with STAT3; the interaction is increased on insulin-induced tyrosine phosphorylation leading to STAT activation. Post-translationally, phosphorylated on serine and tyrosine residues. CAV1 promotes phosphorylation on Ser-23 which then targets the complex to the plasma membrane, lipid rafts and caveolae. Phosphorylation on Ser-36 appears to modulate mitosis in endothelial cells. Phosphorylation on both Tyr-19 and Tyr-27 is required for insulin-induced 'Ser-727' phosphorylation of STAT3 and its activation. Phosphorylation on Tyr-19 is required for insulin-induced phosphorylation of MAPK1 and DNA binding of STAT3. Tyrosine phosphorylation is induced by both EGF and insulin (By. similarity).

The protein localises to the nucleus. It localises to the cytoplasm. It is found in the golgi apparatus membrane. The protein resides in the cell membrane. Its subcellular location is the membrane. The protein localises to the caveola. Functionally, may act as a scaffolding protein within caveolar membranes. Interacts directly with G-protein alpha subunits and can functionally regulate their activity. Acts as an accessory protein in conjunction with CAV1 in targeting to lipid rafts and driving caveolae formation. The Ser-36 phosphorylated form has a role in modulating mitosis in endothelial cells. Positive regulator of cellular mitogenesis of the MAPK signaling pathway. Required for the insulin-stimulated nuclear translocation and activation of MAPK1 and STAT3, and the subsequent regulation of cell cycle progression. This Otolemur garnettii (Small-eared galago) protein is Caveolin-2 (CAV2).